The following is a 201-amino-acid chain: HTH-type transcriptional regulator Hpr (201 aa).

The region spanning A13–G157 is the HTH marR-type domain. Residues I63–E86 constitute a DNA-binding region (H-T-H motif).

Homodimer.

Negative regulator of protease production and sporulation. This chain is HTH-type transcriptional regulator Hpr, found in Geobacillus sp. (strain WCH70).